Reading from the N-terminus, the 375-residue chain is Protein RecA (375 aa).

The tract at residues 1 to 20 (MPAEMKSAASGSDPRSSGER) is disordered. Residue 79-86 (GPESSGKT) coordinates ATP.

Belongs to the RecA family.

It localises to the cytoplasm. Can catalyze the hydrolysis of ATP in the presence of single-stranded DNA, the ATP-dependent uptake of single-stranded DNA by duplex DNA, and the ATP-dependent hybridization of homologous single-stranded DNAs. It interacts with LexA causing its activation and leading to its autocatalytic cleavage. This Parasynechococcus marenigrum (strain WH8102) protein is Protein RecA.